A 291-amino-acid polypeptide reads, in one-letter code: Putative ribosomal protein uL16-like, mitochondrial (291 aa).

The N-terminal 27 residues, Met-1–Leu-27, are a transit peptide targeting the mitochondrion. Over residues Val-127 to Gln-137 the composition is skewed to basic and acidic residues. Residues Val-127–Arg-173 form a disordered region. Over residues Arg-163–Arg-173 the composition is skewed to basic residues.

It belongs to the universal ribosomal protein uL16 family.

It is found in the mitochondrion. Its function is as follows. Could be a component of the large subunit of mitochondrial ribosome. The protein is Putative ribosomal protein uL16-like, mitochondrial of Arabidopsis thaliana (Mouse-ear cress).